The sequence spans 121 residues: Fluoride-specific ion channel FluC 1 (121 aa).

Transmembrane regions (helical) follow at residues 3-23, 35-55, 64-84, and 92-112; these read YVYI…ISFL, IANL…IAFF, AITT…LELI, and FITL…LCYV. Residues Gly-71 and Thr-74 each contribute to the Na(+) site.

This sequence belongs to the fluoride channel Fluc/FEX (TC 1.A.43) family.

The protein resides in the cell membrane. It carries out the reaction fluoride(in) = fluoride(out). With respect to regulation, na(+) is not transported, but it plays an essential structural role and its presence is essential for fluoride channel function. Functionally, fluoride-specific ion channel. Important for reducing fluoride concentration in the cell, thus reducing its toxicity. The sequence is that of Fluoride-specific ion channel FluC 1 from Staphylococcus aureus (strain NCTC 8325 / PS 47).